Consider the following 98-residue polypeptide: Large ribosomal subunit protein uL23 (98 aa).

It belongs to the universal ribosomal protein uL23 family. As to quaternary structure, part of the 50S ribosomal subunit. Contacts protein L29, and trigger factor when it is bound to the ribosome.

One of the early assembly proteins it binds 23S rRNA. One of the proteins that surrounds the polypeptide exit tunnel on the outside of the ribosome. Forms the main docking site for trigger factor binding to the ribosome. The sequence is that of Large ribosomal subunit protein uL23 from Clostridium botulinum (strain Eklund 17B / Type B).